Consider the following 55-residue polypeptide: Lantibiotic epilancin (55 aa).

A propeptide spans 1–24 (cleaved by ElxP); the sequence is MNNSLFDLNLNKGVETQKSDLSPQ. At serine 25 the chain carries D-lactate; by the dehydratase ElxB and the dehydrogenase ElxO. Serine 27 is subject to 2,3-didehydroalanine (Ser); by the dehydratase ElxB. At threonine 31 the chain carries 2,3-didehydrobutyrine; by the dehydratase ElxB. At serine 32 the chain carries 2,3-didehydroalanine (Ser); by the dehydratase ElxB. The lanthionine (Ser-Cys); by the dehydratase ElxB and the cyclase ElxC cross-link spans 36–40; sequence SKKYC. 2 consecutive cross-links (beta-methyllanthionine (Thr-Cys); by the dehydratase ElxB and the cyclase ElxC) follow at residues 44–47 and 46–49; these read TLTC and TCGC. Position 52 is a 2,3-didehydrobutyrine; by the dehydratase ElxB (threonine 52).

The protein belongs to the type A lantibiotic family. Post-translationally, maturation of this lantibiotic involves the enzymatic conversion of Thr, and Ser into dehydrated AA by ElxB and the formation of thioether bonds with cysteine by the cyclase ElxC. The next steps are cleavage of the leader peptide by ElxP and membrane translocation by ElxT. The leader peptide may be removed before membrane translocation, in contrast to other lantibiotics for which the cleavage occur after translocation. This is suggested by the probable cytoplasmic localization of the serine protease ElxP that cleaves the leader peptide. In terms of processing, it is not established whether the 2,3-didehydrobutyrine is the E- or Z-isomer. The N-terminal D-lactate is probably produced by dehydration of Ser-25 by ElxB, followed by proteolytic removal of the leader peptide by the serine protease ElxP and hydrolysis of the resulting new N-terminal dehydroalanine. This hydrolysis may occur spontaneously. The pyruvate group thus formed is reduced to D-lactate by the NADPH-dependent oxidoreductase ElxO. This N-terminal D-lactate protects the lantibiotic against degradation against aminopeptidase.

In terms of biological role, lanthionine-containing peptide antibiotic (lantibiotic) active on Gram-positive bacteria such as staphylococci, enterococci and streptococci. The bactericidal activity of lantibiotics is based on depolarization of energized bacterial cytoplasmic membranes, initiated by the formation of aqueous transmembrane pores. This Staphylococcus epidermidis protein is Lantibiotic epilancin (elkA).